Here is a 238-residue protein sequence, read N- to C-terminus: MIINAKGPASFAEKYIVRSIWDNKFPPGSILPAERELSELIGVTRTTLREVLQRLARDGWLKIQHGKPTRVNNFWETSGLNILETIADLNPEGFPVLVDQLLSARTNVSAIYFRGALRYNPDTAVDVLAKIHQLEDTAESYAEFDYLLHHTLAFSSGNPLYVLILNGFKGLYSRVGRYYFTSSDARLLALNFYKELEVLAQAKNYLDVPALMRTYGMNSGKMWLQLRDDMPASIAQYN.

The HTH gntR-type domain maps to 6 to 74 (KGPASFAEKY…HGKPTRVNNF (69 aa)). Residues 34 to 53 (ERELSELIGVTRTTLREVLQ) constitute a DNA-binding region (H-T-H motif).

Homodimer.

It is found in the cytoplasm. In terms of biological role, multifunctional regulator of fatty acid metabolism. The sequence is that of Fatty acid metabolism regulator protein from Shewanella baltica (strain OS155 / ATCC BAA-1091).